The following is a 251-amino-acid chain: Triosephosphate isomerase (251 aa).

Substrate is bound at residue 9–11 (NWK). His-95 acts as the Electrophile in catalysis. Glu-167 serves as the catalytic Proton acceptor. Substrate is bound by residues Gly-173, Ser-213, and 234–235 (GG). The residue at position 213 (Ser-213) is a Phosphoserine.

The protein belongs to the triosephosphate isomerase family. Homodimer.

It is found in the cytoplasm. It carries out the reaction D-glyceraldehyde 3-phosphate = dihydroxyacetone phosphate. It functions in the pathway carbohydrate biosynthesis; gluconeogenesis. The protein operates within carbohydrate degradation; glycolysis; D-glyceraldehyde 3-phosphate from glycerone phosphate: step 1/1. In terms of biological role, involved in the gluconeogenesis. Catalyzes stereospecifically the conversion of dihydroxyacetone phosphate (DHAP) to D-glyceraldehyde-3-phosphate (G3P). The chain is Triosephosphate isomerase from Bacillus cereus (strain G9842).